We begin with the raw amino-acid sequence, 201 residues long: L-rhamnose-binding lectin SML (201 aa).

Disulfide bonds link Cys10-Cys40, Cys20-Cys99, Cys54-Cys86, Cys67-Cys73, Cys108-Cys138, Cys117-Cys195, Cys152-Cys182, and Cys163-Cys169. SUEL-type lectin domains are found at residues 18 to 100 (LSCD…YNCF) and 107 to 196 (TCEH…YVCQ). Asn168 carries an N-linked (GlcNAc...) asparagine glycan.

As to quaternary structure, homodimer; non-covalently linked.

Functionally, rhamnose-binding lectin. Also binds melibiose, raffinose, D-galactose, L-arabinose, D-fucose, maltose and D-glucose with decreasing affinity. Does not bind D-arabinose, L-fucose, lactose, xylose or 2-deoxy-D-galactose. Shows strong hemagglutinating activity against rabbit erythrocytes. The polypeptide is L-rhamnose-binding lectin SML (Scomberomorus niphonius (Japanese Spanish mackerel)).